Here is a 90-residue protein sequence, read N- to C-terminus: Secretory calcium-binding phosphoprotein proline-glutamine-rich 1 (90 aa).

An N-terminal signal peptide occupies residues 1 to 15 (MQLFLLAALLSAAAA).

As to expression, expressed in enamel organ.

The protein resides in the secreted. Its function is as follows. Tooth-associated epithelia protein that may participate in structuring the basal lamina at cell-tooth interface. This Mus musculus (Mouse) protein is Secretory calcium-binding phosphoprotein proline-glutamine-rich 1.